The following is a 199-amino-acid chain: Large ribosomal subunit protein bL25 (199 aa).

This sequence belongs to the bacterial ribosomal protein bL25 family. CTC subfamily. Part of the 50S ribosomal subunit; part of the 5S rRNA/L5/L18/L25 subcomplex. Contacts the 5S rRNA. Binds to the 5S rRNA independently of L5 and L18.

This is one of the proteins that binds to the 5S RNA in the ribosome where it forms part of the central protuberance. The sequence is that of Large ribosomal subunit protein bL25 from Pelodictyon phaeoclathratiforme (strain DSM 5477 / BU-1).